We begin with the raw amino-acid sequence, 683 residues long: Translation initiation factor IF-2 (683 aa).

The 170-residue stretch at 182-351 folds into the tr-type G domain; sequence KRPPVVTVMG…ILTAEMEELK (170 aa). Residues 191–198 are G1; the sequence is GHVDHGKT. 191–198 is a GTP binding site; it reads GHVDHGKT. Residues 216–220 are G2; it reads GITQH. A G3 region spans residues 237 to 240; that stretch reads DTPG. GTP is bound by residues 237-241 and 291-294; these read DTPGH and NKID. A G4 region spans residues 291–294; the sequence is NKID. Positions 327-329 are G5; that stretch reads SAH.

The protein belongs to the TRAFAC class translation factor GTPase superfamily. Classic translation factor GTPase family. IF-2 subfamily.

The protein resides in the cytoplasm. In terms of biological role, one of the essential components for the initiation of protein synthesis. Protects formylmethionyl-tRNA from spontaneous hydrolysis and promotes its binding to the 30S ribosomal subunits. Also involved in the hydrolysis of GTP during the formation of the 70S ribosomal complex. This chain is Translation initiation factor IF-2, found in Clostridium novyi (strain NT).